The chain runs to 508 residues: Erythropoietin receptor (508 aa).

Residues 1–24 (MDHLGASLWPQVGSLCLLLAGAAW) form the signal peptide. At 25-250 (APPPNLPDPK…SLLTPSDLDP (226 aa)) the chain is on the extracellular side. Cysteines 52 and 62 form a disulfide. An N-linked (GlcNAc...) asparagine glycan is attached at Asn-76. Cys-91 and Cys-107 are disulfide-bonded. The Fibronectin type-III domain occupies 147–247 (APVGLVARLA…EPVSLLTPSD (101 aa)). The short motif at 233 to 237 (WSAWS) is the WSXWS motif element. The helical transmembrane segment at 251–273 (LILTLSLILVVILVLLTVLALLS) threads the bilayer. Residues 274-508 (HRRALKQKIW…PLPPSYVACS (235 aa)) are Cytoplasmic-facing. Lys-281 is covalently cross-linked (Glycyl lysine isopeptide (Lys-Gly) (interchain with G-Cter in ubiquitin)). A Box 1 motif motif is present at residues 282–290 (IWPGIPSPE). Phosphotyrosine; by JAK2 occurs at positions 368 and 426. An ITIM motif motif is present at residues 452-457 (LKYLYL). A Glycyl lysine isopeptide (Lys-Gly) (interchain with G-Cter in ubiquitin) cross-link involves residue Lys-453. Residues Tyr-454, Tyr-456, Tyr-468, Tyr-485, Tyr-489, and Tyr-504 each carry the phosphotyrosine; by JAK2 modification. Positions 454–456 (YLY) are required for high-affinity SOCS3 binding. The disordered stretch occupies residues 467 to 494 (DYSSGDSQGAQGGLSDGPYSNPYENSLI).

This sequence belongs to the type I cytokine receptor family. Type 1 subfamily. In terms of assembly, forms homodimers on EPO stimulation. The tyrosine-phosphorylated form interacts with several SH2 domain-containing proteins including LYN, the adapter protein SH2B2, PTPN6, PTPN11, JAK2, PI3 kinases, STAT5A/B, SOCS3, CRKL. Interacts with INPP5D/SHIP1. SH2B2 binding inhibits the JAK-STAT signaling. Interacts with RHEX; this interaction occurs in a erythropoietin (EPO)-dependent manner. Interacts with ATXN2L. In terms of processing, on EPO stimulation, phosphorylated on C-terminal tyrosine residues by JAK2. The phosphotyrosine motifs are also recruitment sites for several SH2-containing proteins and adapter proteins which mediate cell proliferation. Phosphorylation on Tyr-454 is required for PTPN6 interaction, Tyr-426 for PTPN11. Tyr-426 is also required for SOCS3 binding, but Tyr-454/Tyr-456 motif is the preferred binding site. Ubiquitinated by the ECS(SOCS2) complex following ligand-binding and phosphorylation by JAK2, leading to its degradation by the proteasome. Regulation by the ECS(SOCS2) complex acts as a negative feedback loop of erythropoietin-mediated signaling pathway. Ubiquitination at Lys-281 mediates receptor internalization, whereas ubiquitination at Lys-453 promotes trafficking of activated receptors to the lysosomes for degradation. Ubiquitinated by NOSIP; appears to be either multi-monoubiquitinated or polyubiquitinated. Ubiquitination mediates proliferation and survival of EPO-dependent cells. Erythroid cells and erythroid progenitor cells. In terms of tissue distribution, isoform EPOR-F is the most abundant form in EPO-dependent erythroleukemia cells and in late-stage erythroid progenitors. As to expression, isoform EPOR-S and isoform EPOR-T are the predominant forms in bone marrow. Isoform EPOR-S and isoform EPOR-T are the predominant forms in bone marrow. Isoform EPOR-T is the most abundant from in early-stage erythroid progenitor cells.

The protein resides in the cell membrane. The protein localises to the secreted. Its function is as follows. Receptor for erythropoietin, which mediates erythropoietin-induced erythroblast proliferation and differentiation. Upon EPO stimulation, EPOR dimerizes triggering the JAK2/STAT5 signaling cascade. In some cell types, can also activate STAT1 and STAT3. May also activate the LYN tyrosine kinase. Functionally, acts as a dominant-negative receptor of EPOR-mediated signaling. This Homo sapiens (Human) protein is Erythropoietin receptor.